A 450-amino-acid chain; its full sequence is MNGETNVEQIQIIDSNKHVGETVKIGAWIANKRSSGKIAFLQLRDGTAFFQGVVFKPNFIEAFGEEAGTEKFQEIKHLSQETAVMVTGVIKEDSRSKFGYEMDITDLEVVGASEDYPITPKEHGTDFLMDHRHLWLRSSKQHAIMLVRNEIIRATYEFFNEQGFIKIDSPILTGSAPEGTTELFETDYFGQPAFLSQTGQLYAEAGAMAFGKVFTFGPTFRAEKSKTRRHLTEFWMIEPEMAYTTHEESLDIQEAYVKHLIKSVLKNQQYPLDVLERDTALLEKYVSEPFKRITYDDAIELLQKEEANNDYDHIEWGEDFGSPHETFISNYYGVPTFILNYPKAIKAFYMKPHPTREDVVICADLIAPEGYGEIIGGSERATDYDYLKEKVAEFGLSEEEYSWYLDLRKYGSVPHSGFGLGLERAVTFITGNEHIREAIPFPRMLNRIYP.

This sequence belongs to the class-II aminoacyl-tRNA synthetase family. As to quaternary structure, homodimer.

It is found in the cytoplasm. The enzyme catalyses tRNA(Asn) + L-asparagine + ATP = L-asparaginyl-tRNA(Asn) + AMP + diphosphate + H(+). The polypeptide is Asparagine--tRNA ligase (Enterococcus faecalis (strain ATCC 700802 / V583)).